Here is a 954-residue protein sequence, read N- to C-terminus: SWI/SNF-related matrix-associated actin-dependent regulator of chromatin subfamily A-like protein 1 (954 aa).

Disordered regions lie at residues 1 to 20 (MSLPLTEEQRKKIEENRQKA) and 27 to 238 (KLLA…NSQK). At Ser2 the chain carries N-acetylserine. The stretch at 3-34 (LPLTEEQRKKIEENRQKALARRAEKLLAEQHQ) forms a coiled coil. A mediates interaction with RPA2 region spans residues 5–30 (LTEEQRKKIEENRQKALARRAEKLLA). The span at 7-20 (EEQRKKIEENRQKA) shows a compositional bias: basic and acidic residues. A compositionally biased stretch (polar residues) spans 72–83 (KQQNLSSSSNAD). Phosphoserine occurs at positions 112, 123, 129, and 151. Composition is skewed to polar residues over residues 171 to 183 (KSSQETPAHSSGQ) and 197 to 238 (ASPS…NSQK). A Phosphoserine modification is found at Ser198. HARP domains follow at residues 226–303 (SGSS…QPLE) and 327–398 (SLSF…DPLP). The region spanning 445–600 (NFAIAKGGRL…YTQIIAVKPT (156 aa)) is the Helicase ATP-binding domain. 458 to 465 (DDMGLGKT) provides a ligand contact to ATP. The DESH box motif lies at 549 to 552 (DESH). The Nuclear localization signal signature appears at 644–661 (RRLKSDVLSQLPAKQRKI). The 154-residue stretch at 716-869 (YILDLLESGR…ETNFSEMTES (154 aa)) folds into the Helicase C-terminal domain. The interval 904–934 (ESFDPGSASGTSGSSSQNMGDTLDESSLTAS) is disordered. Residues 909-919 (GSASGTSGSSS) are compositionally biased toward low complexity. A compositionally biased stretch (polar residues) spans 920 to 934 (QNMGDTLDESSLTAS).

The protein belongs to the SNF2/RAD54 helicase family. SMARCAL1 subfamily. Interacts with RPA2; the interaction is direct and mediates the recruitment by the RPA complex of SMARCAL1 to sites of DNA damage. In terms of processing, DNA damage-regulated phosphorylation by kinases that may include ATM, ATR and PRKDC. In terms of tissue distribution, ubiquitously expressed, with high levels in testis.

It is found in the nucleus. The catalysed reaction is ATP + H2O = ADP + phosphate + H(+). In terms of biological role, ATP-dependent annealing helicase that binds selectively to fork DNA relative to ssDNA or dsDNA and catalyzes the rewinding of the stably unwound DNA. Rewinds single-stranded DNA bubbles that are stably bound by replication protein A (RPA). Acts throughout the genome to reanneal stably unwound DNA, performing the opposite reaction of many enzymes, such as helicases and polymerases, that unwind DNA. May play an important role in DNA damage response by acting at stalled replication forks. In Homo sapiens (Human), this protein is SWI/SNF-related matrix-associated actin-dependent regulator of chromatin subfamily A-like protein 1.